The chain runs to 349 residues: tRNA pseudouridine synthase D (349 aa).

F27 is a binding site for substrate. D80 serves as the catalytic Nucleophile. N129 serves as a coordination point for substrate. Positions 155-303 constitute a TRUD domain; sequence GVPNYFGAQR…VEAARRAMLL (149 aa). Residue F329 coordinates substrate.

This sequence belongs to the pseudouridine synthase TruD family.

It carries out the reaction uridine(13) in tRNA = pseudouridine(13) in tRNA. Its function is as follows. Responsible for synthesis of pseudouridine from uracil-13 in transfer RNAs. This is tRNA pseudouridine synthase D from Escherichia coli (strain 55989 / EAEC).